A 221-amino-acid polypeptide reads, in one-letter code: Cytidylate kinase (221 aa).

Residue 11–19 participates in ATP binding; the sequence is GPTASGKGT.

The protein belongs to the cytidylate kinase family. Type 1 subfamily.

Its subcellular location is the cytoplasm. It carries out the reaction CMP + ATP = CDP + ADP. The catalysed reaction is dCMP + ATP = dCDP + ADP. The sequence is that of Cytidylate kinase from Cupriavidus pinatubonensis (strain JMP 134 / LMG 1197) (Cupriavidus necator (strain JMP 134)).